The sequence spans 290 residues: Beta-lactamase OXY-2 (290 aa).

The signal sequence occupies residues 1–27; sequence MIKSSWRKIAMLAAAVPLLLASGALWA. The active-site Acyl-ester intermediate is S72. 236–238 lines the substrate pocket; sequence KTG.

This sequence belongs to the class-A beta-lactamase family.

It carries out the reaction a beta-lactam + H2O = a substituted beta-amino acid. Hydrolyzes broad-spectrum beta-lactam antibiotics. Active against all third-generation cephalosporins but ceftazidime. The protein is Beta-lactamase OXY-2 (bla) of Klebsiella oxytoca.